Here is a 225-residue protein sequence, read N- to C-terminus: Cytidylate kinase (225 aa).

11-19 (GPSGAGKGT) is a binding site for ATP.

The protein belongs to the cytidylate kinase family. Type 1 subfamily.

It is found in the cytoplasm. The catalysed reaction is CMP + ATP = CDP + ADP. The enzyme catalyses dCMP + ATP = dCDP + ADP. The protein is Cytidylate kinase of Mannheimia succiniciproducens (strain KCTC 0769BP / MBEL55E).